The sequence spans 474 residues: E3 ubiquitin-protein ligase rnf168 (474 aa).

Over residues 1-12 (MPPVSEVDRGPV) the composition is skewed to basic and acidic residues. Residues 1–20 (MPPVSEVDRGPVEESSGGLK) are disordered. Residues 26-65 (CPVCLEIFLEPVTLPCMHTFCKPCFLETVDKSNMCCPLCR) form an RING-type zinc finger. The LR motif 1 motif lies at 119-137 (VCQPGELRKEYEDQISKLV). A UMI motif motif is present at residues 152–160 (EEYIQRLLA). An MIU motif 1 motif is present at residues 174-195 (EEQQLENDEKLARLLSLELNSG). Over residues 192 to 203 (LNSGPASESTCN) the composition is skewed to polar residues. Disordered stretches follow at residues 192–259 (LNSG…KPLS) and 367–474 (IQKE…NMGS). The span at 233-243 (PSSSDSSPDSS) shows a compositional bias: low complexity. Residues 353–376 (RWQQEEEDRRLALRIQKELDRENS) carry the MIU motif 2 motif. Basic and acidic residues predominate over residues 367-383 (IQKELDRENSVDRRKGS). The LR motif 2 signature appears at 379–390 (RRKGSADSYQLR). 2 stretches are compositionally biased toward polar residues: residues 385 to 402 (DSYQ…TTSP) and 409 to 418 (KGSNTTTAKN). A compositionally biased stretch (basic and acidic residues) spans 422–432 (RRGEEKTEKRL). A compositionally biased stretch (low complexity) spans 443-457 (VKTPVSSTAVSSTVK).

Belongs to the RNF168 family. As to quaternary structure, monomer.

It is found in the nucleus. It carries out the reaction S-ubiquitinyl-[E2 ubiquitin-conjugating enzyme]-L-cysteine + [acceptor protein]-L-lysine = [E2 ubiquitin-conjugating enzyme]-L-cysteine + N(6)-ubiquitinyl-[acceptor protein]-L-lysine.. It participates in protein modification; protein ubiquitination. E3 ubiquitin-protein ligase required for accumulation of repair proteins to sites of DNA damage. Acts with ube2n/ubc13 to amplify the rnf8-dependent histone ubiquitination. Recruited to sites of DNA damage at double-strand breaks (DSBs) by binding to ubiquitinated histone H2A and ubiquitinates histone H2A and H2AX, leading to amplify the rnf8-dependent H2A ubiquitination and promoting the formation of 'Lys-63'-linked ubiquitin conjugates. This leads to concentrate ubiquitinated histones H2A and H2AX at DNA lesions. Catalyzes monoubiquitination of 'Lys-13' and 'Lys-15' of nucleosomal histone H2A (H2AK13Ub and H2AK15Ub, respectively). This chain is E3 ubiquitin-protein ligase rnf168, found in Danio rerio (Zebrafish).